Reading from the N-terminus, the 482-residue chain is ATP synthase subunit beta (482 aa).

168 to 175 serves as a coordination point for ATP; sequence GGAGVGKT.

Belongs to the ATPase alpha/beta chains family. F-type ATPases have 2 components, CF(1) - the catalytic core - and CF(0) - the membrane proton channel. CF(1) has five subunits: alpha(3), beta(3), gamma(1), delta(1), epsilon(1). CF(0) has three main subunits: a(1), b(2) and c(9-12). The alpha and beta chains form an alternating ring which encloses part of the gamma chain. CF(1) is attached to CF(0) by a central stalk formed by the gamma and epsilon chains, while a peripheral stalk is formed by the delta and b chains.

The protein resides in the cell membrane. It carries out the reaction ATP + H2O + 4 H(+)(in) = ADP + phosphate + 5 H(+)(out). Produces ATP from ADP in the presence of a proton gradient across the membrane. The catalytic sites are hosted primarily by the beta subunits. This Corynebacterium urealyticum (strain ATCC 43042 / DSM 7109) protein is ATP synthase subunit beta.